The sequence spans 153 residues: Small ribosomal subunit protein uS13 (153 aa).

The protein belongs to the universal ribosomal protein uS13 family. In terms of assembly, part of the 30S ribosomal subunit. Forms a loose heterodimer with protein S19. Forms two bridges to the 50S subunit in the 70S ribosome.

Functionally, located at the top of the head of the 30S subunit, it contacts several helices of the 16S rRNA. In the 70S ribosome it contacts the 23S rRNA (bridge B1a) and protein L5 of the 50S subunit (bridge B1b), connecting the 2 subunits; these bridges are implicated in subunit movement. In Pyrobaculum calidifontis (strain DSM 21063 / JCM 11548 / VA1), this protein is Small ribosomal subunit protein uS13.